The sequence spans 668 residues: RING finger protein 214 (668 aa).

Disordered stretches follow at residues 1-87 and 103-125; these read MAAS…AHEE and NGSQ…TSLR. Residue Ala2 is modified to N-acetylalanine. Ser15, Ser40, Ser48, and Ser54 each carry phosphoserine. The segment covering 43–59 has biased composition (polar residues); sequence KQKNLSPPSVSSQMITK. The span at 60 to 71 shows a compositional bias: basic and acidic residues; sequence ESNRNAHLEHPE. Residue Ser196 is modified to Phosphoserine. Residues 220 to 379 are a coiled coil; that stretch reads QDIEKNLDKM…AEKEAELHLT (160 aa). The disordered stretch occupies residues 486–552; sequence FPILNPALSQ…SSETPRPQPV (67 aa). A phosphoserine mark is found at Ser497, Ser511, and Ser516. Residues 523–536 are compositionally biased toward pro residues; it reads PHMPPAASIPPPPG. An RING-type; atypical zinc finger spans residues 623–665; the sequence is CLMCQKLVQPSELHPMACTHALHKECIKFWAQTNTNDTCPFCP.

The protein is RING finger protein 214 (Rnf214) of Mus musculus (Mouse).